The primary structure comprises 124 residues: Cholera enterotoxin subunit B (124 aa).

Positions 1 to 21 (MIKLKFGVFFTVLLSSAYAHG) are cleaved as a signal peptide. A disulfide bridge links Cys-30 with Cys-107.

As to quaternary structure, the holotoxin (choleragen) consists of a pentameric ring of B subunits whose central pore is occupied by the A subunit. The A subunit contains two chains, A1 and A2, linked by a disulfide bridge.

It localises to the secreted. The protein resides in the host cell membrane. Functionally, the B subunit pentameric ring directs the A subunit to its target by binding to the GM1 gangliosides present on the surface of the intestinal epithelial cells. It can bind five GM1 gangliosides. It has no toxic activity by itself. This Vibrio cholerae serotype O1 (strain ATCC 39315 / El Tor Inaba N16961) protein is Cholera enterotoxin subunit B (ctxB).